The chain runs to 669 residues: Dymeclin (669 aa).

Residue G2 is the site of N-myristoyl glycine attachment.

It belongs to the dymeclin family. In terms of assembly, interacts with GOLM1 and PPIB. In terms of processing, myristoylated in vitro; myristoylation is not essential for protein targeting to Golgi compartment.

The protein localises to the cytoplasm. The protein resides in the golgi apparatus. Its subcellular location is the membrane. Functionally, necessary for correct organization of Golgi apparatus. Involved in bone development. In Mus musculus (Mouse), this protein is Dymeclin (Dym).